A 252-amino-acid polypeptide reads, in one-letter code: Imidazole glycerol phosphate synthase subunit HisF (252 aa).

Catalysis depends on residues D11 and D130.

The protein belongs to the HisA/HisF family. In terms of assembly, heterodimer of HisH and HisF.

The protein resides in the cytoplasm. It carries out the reaction 5-[(5-phospho-1-deoxy-D-ribulos-1-ylimino)methylamino]-1-(5-phospho-beta-D-ribosyl)imidazole-4-carboxamide + L-glutamine = D-erythro-1-(imidazol-4-yl)glycerol 3-phosphate + 5-amino-1-(5-phospho-beta-D-ribosyl)imidazole-4-carboxamide + L-glutamate + H(+). The protein operates within amino-acid biosynthesis; L-histidine biosynthesis; L-histidine from 5-phospho-alpha-D-ribose 1-diphosphate: step 5/9. In terms of biological role, IGPS catalyzes the conversion of PRFAR and glutamine to IGP, AICAR and glutamate. The HisF subunit catalyzes the cyclization activity that produces IGP and AICAR from PRFAR using the ammonia provided by the HisH subunit. This Bacillus thuringiensis (strain Al Hakam) protein is Imidazole glycerol phosphate synthase subunit HisF.